The chain runs to 773 residues: Photosystem I P700 chlorophyll a apoprotein A1 (773 aa).

The tract at residues 1–27 (MTISPPERGEKAKGAAPTPYDQPVDRD) is disordered. A run of 8 helical transmembrane segments spans residues 80 to 103 (IFSA…FHGA), 166 to 189 (LMAL…YHYH), 205 to 229 (LQHH…HIGA), 315 to 333 (ISHH…GHMW), 375 to 398 (WHGQ…HHMY), 414 to 440 (LGLF…IAMI), 462 to 484 (AIIS…LYIH), and 564 to 582 (LMIH…LILL). Residues Cys606 and Cys615 each contribute to the [4Fe-4S] cluster site. 2 helical membrane-spanning segments follow: residues 622 to 643 (HVFL…HFSW) and 687 to 709 (ISMY…MFLF). His698 is a divinylchlorophyll a' binding site. Divinyl chlorophyll a is bound by residues Met706 and Tyr714. Residue Trp715 coordinates phylloquinone. Residues 747–767 (AVGVAHFLLGGIATTWAFFHA) form a helical membrane-spanning segment.

This sequence belongs to the PsaA/PsaB family. The PsaA/B heterodimer binds the P700 divinyl chlorophyll special pair and subsequent electron acceptors. PSI consists of a core antenna complex that captures photons, and an electron transfer chain that converts photonic excitation into a charge separation. The cyanobacterial PSI reaction center is composed of one copy each of PsaA,B,C,D,E,F,I,J,K,L,M and X, and forms trimeric complexes. PSI electron transfer chain: 5 divinyl chlorophyll a, 1 divinyl chlorophyll a', 2 phylloquinones and 3 4Fe-4S clusters. PSI core antenna: 90 divinyl chlorophyll a, 22 carotenoids, 3 phospholipids and 1 galactolipid. P700 is a divinyl chlorophyll a/divinyl chlorophyll a' dimer, A0 is one or more divinylchlorophyll a, A1 is one or both phylloquinones and FX is a shared 4Fe-4S iron-sulfur center. serves as cofactor.

It is found in the cellular thylakoid membrane. The catalysed reaction is reduced [plastocyanin] + hnu + oxidized [2Fe-2S]-[ferredoxin] = oxidized [plastocyanin] + reduced [2Fe-2S]-[ferredoxin]. Its function is as follows. PsaA and PsaB bind P700, the primary electron donor of photosystem I (PSI), as well as the electron acceptors A0, A1 and FX. PSI is a plastocyanin/cytochrome c6-ferredoxin oxidoreductase, converting photonic excitation into a charge separation, which transfers an electron from the donor P700 chlorophyll pair to the spectroscopically characterized acceptors A0, A1, FX, FA and FB in turn. Oxidized P700 is reduced on the lumenal side of the thylakoid membrane by plastocyanin or cytochrome c6. The chain is Photosystem I P700 chlorophyll a apoprotein A1 from Prochlorococcus marinus (strain SARG / CCMP1375 / SS120).